We begin with the raw amino-acid sequence, 1209 residues long: DNA-directed RNA polymerase subunit beta (1209 aa).

Positions 1173-1192 (QQEKKKLAEEAAKKDDKPDE) are enriched in basic and acidic residues. The tract at residues 1173–1209 (QQEKKKLAEEAAKKDDKPDEPVDESDSSTSSDDKVSK) is disordered.

It belongs to the RNA polymerase beta chain family. In terms of assembly, the RNAP catalytic core consists of 2 alpha, 1 beta, 1 beta' and 1 omega subunit. When a sigma factor is associated with the core the holoenzyme is formed, which can initiate transcription.

The enzyme catalyses RNA(n) + a ribonucleoside 5'-triphosphate = RNA(n+1) + diphosphate. In terms of biological role, DNA-dependent RNA polymerase catalyzes the transcription of DNA into RNA using the four ribonucleoside triphosphates as substrates. The polypeptide is DNA-directed RNA polymerase subunit beta (Lactobacillus johnsonii (strain CNCM I-12250 / La1 / NCC 533)).